Consider the following 426-residue polypeptide: Serine--tRNA ligase (426 aa).

Position 233 to 235 (233 to 235 (TAE)) interacts with L-serine. ATP is bound at residue 264-266 (RSE). Residue glutamate 287 coordinates L-serine. 351-354 (EISS) provides a ligand contact to ATP. Serine 387 lines the L-serine pocket.

Belongs to the class-II aminoacyl-tRNA synthetase family. Type-1 seryl-tRNA synthetase subfamily. As to quaternary structure, homodimer. The tRNA molecule binds across the dimer.

It is found in the cytoplasm. The catalysed reaction is tRNA(Ser) + L-serine + ATP = L-seryl-tRNA(Ser) + AMP + diphosphate + H(+). The enzyme catalyses tRNA(Sec) + L-serine + ATP = L-seryl-tRNA(Sec) + AMP + diphosphate + H(+). Its pathway is aminoacyl-tRNA biosynthesis; selenocysteinyl-tRNA(Sec) biosynthesis; L-seryl-tRNA(Sec) from L-serine and tRNA(Sec): step 1/1. Functionally, catalyzes the attachment of serine to tRNA(Ser). Is also able to aminoacylate tRNA(Sec) with serine, to form the misacylated tRNA L-seryl-tRNA(Sec), which will be further converted into selenocysteinyl-tRNA(Sec). The protein is Serine--tRNA ligase of Clostridium botulinum (strain Okra / Type B1).